The chain runs to 370 residues: tRNA-specific 2-thiouridylase MnmA (370 aa).

ATP contacts are provided by residues A24 to S31 and L50. C119 functions as the Nucleophile in the catalytic mechanism. C119 and C215 are oxidised to a cystine. ATP is bound at residue G143. Residues K165 to Q167 are interaction with tRNA. The active-site Cysteine persulfide intermediate is the C215.

It belongs to the MnmA/TRMU family.

The protein resides in the cytoplasm. The enzyme catalyses S-sulfanyl-L-cysteinyl-[protein] + uridine(34) in tRNA + AH2 + ATP = 2-thiouridine(34) in tRNA + L-cysteinyl-[protein] + A + AMP + diphosphate + H(+). Its function is as follows. Catalyzes the 2-thiolation of uridine at the wobble position (U34) of tRNA, leading to the formation of s(2)U34. The polypeptide is tRNA-specific 2-thiouridylase MnmA (Wolbachia sp. subsp. Drosophila simulans (strain wRi)).